A 127-amino-acid chain; its full sequence is Fluoride-specific ion channel FluC (127 aa).

4 helical membrane-spanning segments follow: residues 4–24 (LLCAVFIGGGTGSVLRWWLGM), 35–55 (IGTLTANLVGAFVIGAGLAWF), 71–91 (TGFCGGLTTFSTFSAEVVFLL), and 101–121 (LNVMVNLLGSFAMTAVAFWLF). Residues Gly75 and Thr78 each contribute to the Na(+) site.

The protein belongs to the fluoride channel Fluc/FEX (TC 1.A.43) family.

It is found in the cell inner membrane. It catalyses the reaction fluoride(in) = fluoride(out). Na(+) is not transported, but it plays an essential structural role and its presence is essential for fluoride channel function. In terms of biological role, fluoride-specific ion channel. Important for reducing fluoride concentration in the cell, thus reducing its toxicity. The chain is Fluoride-specific ion channel FluC from Klebsiella pneumoniae (strain 342).